The following is a 148-amino-acid chain: Snaclec 27 (148 aa).

A signal peptide spans 1 to 23; it reads WGDSSSSASACWSCFSLVSGIGA. 3 cysteine pairs are disulfide-bonded: Cys27/Cys38, Cys55/Cys144, and Cys121/Cys136. The C-type lectin domain occupies 34–145; it reads HEGHCYKVFS…CSSTQQFVCK (112 aa).

Belongs to the snaclec family. In terms of assembly, heterodimer; disulfide-linked. In terms of tissue distribution, expressed by the venom gland.

The protein localises to the secreted. Functionally, interferes with one step of hemostasis (modulation of platelet aggregation, or coagulation cascade, for example). This Echis ocellatus (Ocellated saw-scaled viper) protein is Snaclec 27.